The following is a 78-amino-acid chain: Sec-independent protein translocase protein TatA (78 aa).

The helical transmembrane segment at 1 to 21 (MGSLSIWHWIVVIAVVLLLFG) threads the bilayer. Residues 43 to 60 (LQDDEKTAEKSEPVKSID) show a composition bias toward basic and acidic residues. A disordered region spans residues 43 to 78 (LQDDEKTAEKSEPVKSIDHTSTPGATNRTDVGSKAV). Polar residues predominate over residues 61-72 (HTSTPGATNRTD).

The protein belongs to the TatA/E family. As to quaternary structure, the Tat system comprises two distinct complexes: a TatABC complex, containing multiple copies of TatA, TatB and TatC subunits, and a separate TatA complex, containing only TatA subunits. Substrates initially bind to the TatABC complex, which probably triggers association of the separate TatA complex to form the active translocon.

The protein localises to the cell inner membrane. In terms of biological role, part of the twin-arginine translocation (Tat) system that transports large folded proteins containing a characteristic twin-arginine motif in their signal peptide across membranes. TatA could form the protein-conducting channel of the Tat system. This Rhodopseudomonas palustris (strain ATCC BAA-98 / CGA009) protein is Sec-independent protein translocase protein TatA.